A 502-amino-acid chain; its full sequence is 2-isopropylmalate synthase (502 aa).

Mn(2+) contacts are provided by Asp-1, His-189, His-191, and Asn-225. Residues 1–254 (DGEQALQASL…STNINYKEIY (254 aa)) form the Pyruvate carboxyltransferase domain. The interval 379-502 (CLKFFSVQSI…VNKKLQELKK (124 aa)) is regulatory domain.

The protein belongs to the alpha-IPM synthase/homocitrate synthase family. LeuA type 1 subfamily. In terms of assembly, homodimer. Mn(2+) serves as cofactor.

The protein localises to the cytoplasm. The enzyme catalyses 3-methyl-2-oxobutanoate + acetyl-CoA + H2O = (2S)-2-isopropylmalate + CoA + H(+). It participates in amino-acid biosynthesis; L-leucine biosynthesis; L-leucine from 3-methyl-2-oxobutanoate: step 1/4. Functionally, catalyzes the condensation of the acetyl group of acetyl-CoA with 3-methyl-2-oxobutanoate (2-ketoisovalerate) to form 3-carboxy-3-hydroxy-4-methylpentanoate (2-isopropylmalate). The sequence is that of 2-isopropylmalate synthase from Buchnera aphidicola subsp. Macrosiphoniella ludovicianae.